The following is a 70-amino-acid chain: Cytochrome c oxidase subunit 8B, mitochondrial (70 aa).

A mitochondrion-targeting transit peptide spans M1–H24. Residues V25–S35 lie on the Mitochondrial matrix side of the membrane. The chain crosses the membrane as a helical span at residues P36–S59. Over H60–A70 the chain is Mitochondrial intermembrane.

The protein belongs to the cytochrome c oxidase VIII family. As to quaternary structure, component of the cytochrome c oxidase (complex IV, CIV), a multisubunit enzyme composed of 14 subunits. The complex is composed of a catalytic core of 3 subunits MT-CO1, MT-CO2 and MT-CO3, encoded in the mitochondrial DNA, and 11 supernumerary subunits COX4I, COX5A, COX5B, COX6A, COX6B, COX6C, COX7A, COX7B, COX7C, COX8 and NDUFA4, which are encoded in the nuclear genome. The complex exists as a monomer or a dimer and forms supercomplexes (SCs) in the inner mitochondrial membrane with NADH-ubiquinone oxidoreductase (complex I, CI) and ubiquinol-cytochrome c oxidoreductase (cytochrome b-c1 complex, complex III, CIII), resulting in different assemblies (supercomplex SCI(1)III(2)IV(1) and megacomplex MCI(2)III(2)IV(2)).

The protein localises to the mitochondrion inner membrane. It functions in the pathway energy metabolism; oxidative phosphorylation. Functionally, component of the cytochrome c oxidase, the last enzyme in the mitochondrial electron transport chain which drives oxidative phosphorylation. The respiratory chain contains 3 multisubunit complexes succinate dehydrogenase (complex II, CII), ubiquinol-cytochrome c oxidoreductase (cytochrome b-c1 complex, complex III, CIII) and cytochrome c oxidase (complex IV, CIV), that cooperate to transfer electrons derived from NADH and succinate to molecular oxygen, creating an electrochemical gradient over the inner membrane that drives transmembrane transport and the ATP synthase. Cytochrome c oxidase is the component of the respiratory chain that catalyzes the reduction of oxygen to water. Electrons originating from reduced cytochrome c in the intermembrane space (IMS) are transferred via the dinuclear copper A center (CU(A)) of subunit 2 and heme A of subunit 1 to the active site in subunit 1, a binuclear center (BNC) formed by heme A3 and copper B (CU(B)). The BNC reduces molecular oxygen to 2 water molecules using 4 electrons from cytochrome c in the IMS and 4 protons from the mitochondrial matrix. The chain is Cytochrome c oxidase subunit 8B, mitochondrial (COX8B) from Eulemur fulvus fulvus (Brown lemur).